We begin with the raw amino-acid sequence, 350 residues long: Leucine-rich repeat-containing protein 58 (350 aa).

LRR repeat units lie at residues 14 to 34 (NLTH…NKRK), 35 to 56 (DVQQ…VASF), 58 to 80 (HLHL…LGLT), 81 to 102 (KLKT…KEMG), 105 to 125 (RLEV…QFLQ), 128 to 149 (TLKS…IENL), 151 to 173 (SLEF…ANLP), 174 to 195 (YLSY…LAQV), 197 to 218 (SLRS…ILSL), and 220 to 240 (HLHE…RDLT).

This Xenopus laevis (African clawed frog) protein is Leucine-rich repeat-containing protein 58 (lrrc58).